Here is a 212-residue protein sequence, read N- to C-terminus: Cytidylate kinase (212 aa).

9 to 17 (GPAAAGKGT) contributes to the ATP binding site.

Belongs to the cytidylate kinase family. Type 1 subfamily.

It is found in the cytoplasm. It catalyses the reaction CMP + ATP = CDP + ADP. It carries out the reaction dCMP + ATP = dCDP + ADP. The protein is Cytidylate kinase of Rhizobium meliloti (strain 1021) (Ensifer meliloti).